Here is a 644-residue protein sequence, read N- to C-terminus: Phosphatidylinositol polyphosphate 5-phosphatase type IV (644 aa).

The interval 1 to 193 is disordered; sequence MPSKAENLRP…RLPSLLPPRP (193 aa). Tandem repeats lie at residues 10-13, 15-18, 28-31, 39-42, 55-58, 69-71, 72-74, and 75-78. Positions 10–242 are 13 X 4 AA repeats of P-X-X-P; that stretch reads PSEPAPQPPE…SLGPGRPRSP (233 aa). Residues 78-90 are compositionally biased toward basic and acidic residues; that stretch reads PRLERALSLDDKG. The residue at position 99 (Ser99) is a Phosphoserine. Polar residues predominate over residues 107–118; sequence NGTSPSRGSVQS. Repeat 9 spans residues 121 to 124; it reads PGAP. Positions 152-163 are enriched in low complexity; it reads GSPSSGGNPLSG. Tandem repeats lie at residues 169 to 172, 183 to 185, 190 to 193, and 236 to 239. Phosphoserine occurs at positions 241 and 256. Position 641 is a cysteine methyl ester (Cys641). Residue Cys641 is the site of S-farnesyl cysteine attachment. Positions 642–644 are cleaved as a propeptide — removed in mature form; that stretch reads SVS.

Belongs to the inositol polyphosphate 5-phosphatase family. As to quaternary structure, interacts (when prenylated) with PDE6D; this is important for normal location in cilia.

It is found in the cytoplasm. The protein resides in the cytoskeleton. It localises to the cilium axoneme. Its subcellular location is the golgi apparatus. The protein localises to the golgi stack membrane. It is found in the cell membrane. The protein resides in the cell projection. It localises to the ruffle. Its subcellular location is the nucleus. The catalysed reaction is a 1,2-diacyl-sn-glycero-3-phospho-(1D-myo-inositol-4,5-bisphosphate) + H2O = a 1,2-diacyl-sn-glycero-3-phospho-(1D-myo-inositol 4-phosphate) + phosphate. The enzyme catalyses a 1,2-diacyl-sn-glycero-3-phospho-(1D-myo-inositol-3,4,5-trisphosphate) + H2O = a 1,2-diacyl-sn-glycero-3-phospho-(1D-myo-inositol-3,4-bisphosphate) + phosphate. It catalyses the reaction a 1,2-diacyl-sn-glycero-3-phospho-(1D-myo-inositol-3,5-bisphosphate) + H2O = a 1,2-diacyl-sn-glycero-3-phospho-(1D-myo-inositol-3-phosphate) + phosphate. Its function is as follows. Phosphatidylinositol (PtdIns) phosphatase that specifically hydrolyzes the 5-phosphate of phosphatidylinositol-3,4,5-trisphosphate (PtdIns(3,4,5)P3), phosphatidylinositol 4,5-bisphosphate(PtdIns(4,5)P2) and phosphatidylinositol 3,5-bisphosphate (PtdIns(3,5)P2). Specific for lipid substrates, inactive towards water soluble inositol phosphates. Plays an essential role in the primary cilium by controlling ciliary growth and phosphoinositide 3-kinase (PI3K) signaling and stability. The protein is Phosphatidylinositol polyphosphate 5-phosphatase type IV (INPP5E) of Pan troglodytes (Chimpanzee).